The following is a 352-amino-acid chain: Glycerol-1-phosphate dehydrogenase [NAD(P)+] (352 aa).

NAD(+) is bound by residues 98–102 (GKPID) and 120–123 (TAAS). Aspartate 125 lines the substrate pocket. Residue serine 129 coordinates NAD(+). Position 172 (aspartate 172) interacts with substrate. The Zn(2+) site is built by aspartate 172 and histidine 252. Histidine 256 contributes to the substrate binding site. A Zn(2+)-binding site is contributed by histidine 268.

Belongs to the glycerol-1-phosphate dehydrogenase family. Zn(2+) serves as cofactor.

The protein resides in the cytoplasm. It catalyses the reaction sn-glycerol 1-phosphate + NAD(+) = dihydroxyacetone phosphate + NADH + H(+). It carries out the reaction sn-glycerol 1-phosphate + NADP(+) = dihydroxyacetone phosphate + NADPH + H(+). The protein operates within membrane lipid metabolism; glycerophospholipid metabolism. In terms of biological role, catalyzes the NAD(P)H-dependent reduction of dihydroxyacetonephosphate (DHAP or glycerone phosphate) to glycerol 1-phosphate (G1P). The G1P thus generated is used as the glycerophosphate backbone of phospholipids in the cellular membranes of Archaea. This is Glycerol-1-phosphate dehydrogenase [NAD(P)+] from Natronomonas pharaonis (strain ATCC 35678 / DSM 2160 / CIP 103997 / JCM 8858 / NBRC 14720 / NCIMB 2260 / Gabara) (Halobacterium pharaonis).